Consider the following 92-residue polypeptide: uncharacterized protein (92 aa).

The region spanning 1–92 (MNGNKDAIFK…LKNLLKGWIE (92 aa)) is the HTH arsR-type domain. The segment at residues 37-61 (IRLITKYDLSITRQAIAKHLSVLED) is a DNA-binding region (H-T-H motif).

This is an uncharacterized protein from Bacillus subtilis (strain 168).